Consider the following 285-residue polypeptide: Phosphatidate cytidylyltransferase (285 aa).

A run of 8 helical transmembrane segments spans residues 10–30 (FVLI…GFAI), 56–76 (VWLA…LPEY), 93–113 (LGWW…AAIW), 121–141 (LIFG…LRAW), 151–171 (AIWL…AYMF), 190–210 (WQGF…YGMW), 213–233 (LDVA…ASVL), and 264–284 (IDSL…VFRT).

This sequence belongs to the CDS family.

The protein localises to the cell inner membrane. It carries out the reaction a 1,2-diacyl-sn-glycero-3-phosphate + CTP + H(+) = a CDP-1,2-diacyl-sn-glycerol + diphosphate. It participates in phospholipid metabolism; CDP-diacylglycerol biosynthesis; CDP-diacylglycerol from sn-glycerol 3-phosphate: step 3/3. The chain is Phosphatidate cytidylyltransferase (cdsA) from Escherichia coli O157:H7.